The following is a 20-amino-acid chain: Haemoporin (20 aa).

The tract at residues 1–20 (AAVPEAAAEATAEAAPVSEF) is disordered.

In terms of assembly, homopentamer. Forms a cylindrical structure with a central pore. In terms of tissue distribution, detected in the hemolymph.

The protein resides in the secreted. This Aplysia californica (California sea hare) protein is Haemoporin.